The primary structure comprises 211 residues: Small ribosomal subunit protein uS3c (211 aa).

The KH type-2 domain maps to 39 to 109 (IREFAESRLP…NVALYVTKTQ (71 aa)).

It belongs to the universal ribosomal protein uS3 family. As to quaternary structure, part of the 30S ribosomal subunit.

It is found in the plastid. It localises to the chloroplast. In Ostreococcus tauri, this protein is Small ribosomal subunit protein uS3c (rps3).